A 330-amino-acid chain; its full sequence is MSDSEKLNLDSIIGRLLEVQGSRPGKNVQLTENEIRGLCLKSREIFLSQPILLELEAPLKICGDIHGQYYDLLRLFEYGGFPPESNYLFLGDYVDRGKQSLETICLLLAYKIKYPENFFLLRGNHECASINRIYGFYDECKRRYNIKLWKTFTDXFNXLPIAAIVDEKIFCCHGGLSPDLQSMEQIRRIMRPTDVPDQGLLCDLLWSDPDKDVQGWGENDRGVSFTFGAEVVAKFLHKHDLDLICRAHQVVEDGYEFFAKRQLVTLFSAPNYCGEFDNAGAMMSVDETLMCSFQILKPADKNKGKYGQFSGLNPGGRPITPPRNSAKAKK.

At Ser-2 the chain carries N-acetylserine. Phosphoserine occurs at positions 2 and 22. Asp-64, His-66, Asp-92, and Asn-124 together coordinate Mn(2+). His-125 acts as the Proton donor in catalysis. Mn(2+)-binding residues include His-173 and His-248. An N6-acetyllysine modification is found at Lys-305. A Phosphotyrosine modification is found at Tyr-306. The interval 306 to 330 is disordered; it reads YGQFSGLNPGGRPITPPRNSAKAKK. A Phosphothreonine modification is found at Thr-320. Position 325 is a phosphoserine (Ser-325).

It belongs to the PPP phosphatase family. PP-1 subfamily. PP1 comprises a catalytic subunit, PPP1CA, PPP1CB or PPP1CC, which is folded into its native form by inhibitor 2 and glycogen synthetase kinase 3, and then complexed to one or several targeting or regulatory subunits. PPP1R12A, PPP1R12B and PPP1R12C mediate binding to myosin. PPP1R3A (in skeletal muscle), PPP1R3B (in liver), PPP1R3C, PPP1R3D and PPP1R3F (in brain) mediate binding to glycogen. Interacts with PPP1R15A and PPP1R15B; the interactions mediate binding to EIF2S1. Part of a complex containing PPP1R15B, PP1 and NCK1/2. Interacts with PPP1R9A, PPP1R9B and PPP1R7. Interacts with YLPM1. Forms a complex with ILF2, ILF3, YLPM1, KHDRBS1, RBMX and NCOA5. Interacts with NOM1 and PPP1R8. Interacts with PPP1R16B. Interacts with RPSA only in the presence of PPP1R16B. Component of the PNUTS-PP1 phosphatase complex, composed of PPP1R10/PNUTS, TOX4, WDR82, and PPP1CA or PPP1CB or PPP1CC. Interacts with PPP1R10/PNUTS and PPP1R8. Interacts with WDR82 in the presence of PPP1R10/PNUTS. Interacts with PPP1R39. transition from mitosis into interphase. Interacts with TRIM28; the interaction dephosphorylates TRIM28 on 'Ser-824' and forms a complex at the p21 promoter site. Interacts with NEK2. Interacts with PHACTR4; which acts as an activator of PP1 activity. Interacts with FER; this promotes phosphorylation at Thr-320. Interacts with BTBD10. Interacts with KCTD20. Interacts with FOXP3. Interacts with CENPA. Interacts with ATG16L1. Found in a complex with PPP1CA, PPP1CC, SHC1 and PEAK1. Interacts with tensin TNS1. Interacts with SAXO4, PPP1R21, PPP1R26, PPP1R27, PPP1R35, PPP1R36, PPP1R37, SH3RF2, ELFN1 and ELFN2. Interacts with TPRN; the interaction results in inhibition of PPC1A phosphatase activity. Interacts with SKA1 (via C-terminus); the interaction is direct and required for the recruitment of PP1 to the kinetochore. Interacts with the KNL1 complex subunit KNL1; the interaction is direct and mutually exclusive with KNL1 binding to microtubules. Component of the SHOC2-MRAS-PP1c (SMP) complex consisting of SHOC2, GTP-bound M-Ras/MRAS and the catalytic subunit of protein phosphatase 1 (either PPP1CA, PPP1CB or PPP1CC). SHOC2 and PP1c preferably bind M-Ras/MRAS, but they also bind K-Ras/KRAS, N-Ras/NRAS and H-Ras/HRAS; these interactions are GTP-dependent and both SHOC2 and PP1c are required to form a stable complex. Interacts with SHOC2 in the absence of Ras GTPases. It depends on Mn(2+) as a cofactor. In terms of processing, phosphorylated. Dephosphorylated at Thr-320 in the presence of ionizing radiation.

It localises to the cytoplasm. The protein resides in the nucleus. Its subcellular location is the nucleoplasm. It is found in the nucleolus. The catalysed reaction is O-phospho-L-seryl-[protein] + H2O = L-seryl-[protein] + phosphate. It catalyses the reaction O-phospho-L-threonyl-[protein] + H2O = L-threonyl-[protein] + phosphate. Protein phosphatase that associates with over 200 regulatory proteins to form highly specific holoenzymes which dephosphorylate hundreds of biological targets. Protein phosphatase 1 (PP1) is essential for cell division, transcription elongation, and participates in the regulation of glycogen metabolism, muscle contractility and protein synthesis. Involved in regulation of ionic conductances and long-term synaptic plasticity. May play an important role in dephosphorylating substrates such as the postsynaptic density-associated Ca(2+)/calmodulin dependent protein kinase II. Catalytic component of the PNUTS-PP1 protein phosphatase complex, a protein phosphatase 1 (PP1) complex that promotes RNA polymerase II transcription pause-release, allowing transcription elongation: the PNUTS-PP1 complex mediates the release of RNA polymerase II from promoter-proximal region of genes by catalyzing dephosphorylation of proteins involved in transcription, such as AFF4, CDK9, MEPCE, INTS12, NCBP1, POLR2M/GDOWN1 and SUPT6H. The PNUTS-PP1 complex also regulates transcription termination by mediating dephosphorylation of SUPT5H in termination zones downstream of poly(A) sites, thereby promoting deceleration of RNA polymerase II transcription. PNUTS-PP1 complex is also involved in the response to replication stress by mediating dephosphorylation of POLR2A at 'Ser-5' of the CTD, promoting RNA polymerase II degradation. PNUTS-PP1 also plays a role in the control of chromatin structure and cell cycle progression during the transition from mitosis into interphase. Regulates NEK2 function in terms of kinase activity and centrosome number and splitting, both in the presence and absence of radiation-induced DNA damage. Regulator of neural tube and optic fissure closure, and enteric neural crest cell (ENCCs) migration during development. In balance with CSNK1D and CSNK1E, determines the circadian period length, through the regulation of the speed and rhythmicity of PER1 and PER2 phosphorylation. May dephosphorylate CSNK1D and CSNK1E. Dephosphorylates the 'Ser-418' residue of FOXP3 in regulatory T-cells (Treg) from patients with rheumatoid arthritis, thereby inactivating FOXP3 and rendering Treg cells functionally defective. Dephosphorylates CENPA. Dephosphorylates the 'Ser-139' residue of ATG16L1 causing dissociation of ATG12-ATG5-ATG16L1 complex, thereby inhibiting autophagy. Together with PPP1CC (PP1-gamma subunit), dephosphorylates IFIH1/MDA5 and RIG-I leading to their activation and a functional innate immune response. Core component of the SHOC2-MRAS-PP1c (SMP) holophosphatase complex that regulates the MAPK pathway activation. The SMP complex specifically dephosphorylates the inhibitory phosphorylation at 'Ser-259' of RAF1 kinase, 'Ser-365' of BRAF kinase and 'Ser-214' of ARAF kinase, stimulating their kinase activities. The SMP complex enhances the dephosphorylation activity and substrate specificity of PP1c. This chain is Serine/threonine-protein phosphatase PP1-alpha catalytic subunit (PPP1CA), found in Canis lupus familiaris (Dog).